A 232-amino-acid polypeptide reads, in one-letter code: Ribonuclease 3 (232 aa).

The RNase III domain maps to 10–135; it reads ALKIYEATGY…LIGAMYMDGG (126 aa). E48 is a Mg(2+) binding site. D52 is an active-site residue. N121 and E124 together coordinate Mg(2+). Residue E124 is part of the active site. The DRBM domain maps to 161–230; it reads DPKTALQEWV…AKLMLKKITE (70 aa).

It belongs to the ribonuclease III family. Homodimer. Mg(2+) serves as cofactor.

It localises to the cytoplasm. It catalyses the reaction Endonucleolytic cleavage to 5'-phosphomonoester.. Functionally, digests double-stranded RNA. Involved in the processing of primary rRNA transcript to yield the immediate precursors to the large and small rRNAs (23S and 16S). Processes some mRNAs, and tRNAs when they are encoded in the rRNA operon. Processes pre-crRNA and tracrRNA of type II CRISPR loci if present in the organism. The chain is Ribonuclease 3 from Anaplasma marginale (strain St. Maries).